Consider the following 317-residue polypeptide: U5 small nuclear ribonucleoprotein TSSC4 (317 aa).

Acidic residues predominate over residues M1–L19. Residues M1–V74 form a disordered region. Residues P20–S37 are compositionally biased toward low complexity. 4 positions are modified to phosphoserine: S57, S64, S83, and S92. Residues V74–A101 form a hom2; mediates interaction with the U5 snRNP complexes and required for spliceosomal tri-snRNP complex assembly region. The segment at A101–Y152 is disordered. Residues A108 to G117 show a composition bias toward polar residues. T124 carries the phosphothreonine modification. Residues V146 to R300 are interaction with SNRNP200. The segment at L147–L183 is hom3; mediates interaction with the U5 snRNP complexes. The segment at F198–G238 is hom4; necessary for interaction with the PRPF19 complex and required for spliceosomal tri-snRNP complex assembly. N6-acetyllysine is present on K214. A disordered region spans residues V216–V317. Over residues E240–G250 the composition is skewed to low complexity.

It belongs to the TSSC4 family. Interacts in a RNA-independent manner with distinct U5 snRNP-containing complexes, the mono-U5 snRNP and the post-splicing U5 snRNP-PRPF19 complex. Interacts with SNRNP200; the interaction is direct, excludes recruitment of C9ORF78 and WBP4 to SNRNP200 and negatively regulates its RNA helicase activity. Interacts with PRPF8; the interaction is direct. Expressed in placenta. Widely expressed in embryo and newborn.

Its subcellular location is the nucleus. The protein localises to the cytoplasm. Functionally, protein associated with the U5 snRNP, during its maturation and its post-splicing recycling and which is required for spliceosomal tri-snRNP complex assembly in the nucleus. Has a molecular sequestering activity and transiently hinders SNRNP200 binding sites for constitutive splicing factors that intervene later during the assembly of the spliceosome and splicing. Together with its molecular sequestering activity, may also function as a molecular adapter and placeholder, coordinating the assembly of the U5 snRNP and its association with the U4/U6 di-snRNP. In Mus musculus (Mouse), this protein is U5 small nuclear ribonucleoprotein TSSC4.